Reading from the N-terminus, the 298-residue chain is 4-hydroxy-tetrahydrodipicolinate synthase (298 aa).

Threonine 45 is a binding site for pyruvate. The Proton donor/acceptor role is filled by tyrosine 133. The active-site Schiff-base intermediate with substrate is the lysine 161. Pyruvate is bound at residue isoleucine 203.

This sequence belongs to the DapA family. As to quaternary structure, homotetramer; dimer of dimers.

It is found in the cytoplasm. It carries out the reaction L-aspartate 4-semialdehyde + pyruvate = (2S,4S)-4-hydroxy-2,3,4,5-tetrahydrodipicolinate + H2O + H(+). Its pathway is amino-acid biosynthesis; L-lysine biosynthesis via DAP pathway; (S)-tetrahydrodipicolinate from L-aspartate: step 3/4. Its function is as follows. Catalyzes the condensation of (S)-aspartate-beta-semialdehyde [(S)-ASA] and pyruvate to 4-hydroxy-tetrahydrodipicolinate (HTPA). In Wigglesworthia glossinidia brevipalpis, this protein is 4-hydroxy-tetrahydrodipicolinate synthase.